A 452-amino-acid polypeptide reads, in one-letter code: Acetyl-CoA decarbonylase/synthase complex subunit delta (452 aa).

Belongs to the CdhD family. As to quaternary structure, heterodimer of delta and gamma chains. The ACDS complex is made up of alpha, epsilon, beta, gamma and delta chains with a probable stoichiometry of (alpha(2)epsilon(2))(4)-beta(8)-(gamma(1)delta(1))(8).

Functionally, part of a complex that catalyzes the reversible cleavage of acetyl-CoA, allowing autotrophic growth from CO(2). Probably maintains the overall quaternary structure of the ACDS complex. The protein is Acetyl-CoA decarbonylase/synthase complex subunit delta of Archaeoglobus fulgidus (strain ATCC 49558 / DSM 4304 / JCM 9628 / NBRC 100126 / VC-16).